The following is a 484-amino-acid chain: Probable glycine dehydrogenase (decarboxylating) subunit 2 (484 aa).

N6-(pyridoxal phosphate)lysine is present on K264.

The protein belongs to the GcvP family. C-terminal subunit subfamily. As to quaternary structure, the glycine cleavage system is composed of four proteins: P, T, L and H. In this organism, the P 'protein' is a heterodimer of two subunits. Pyridoxal 5'-phosphate serves as cofactor.

It carries out the reaction N(6)-[(R)-lipoyl]-L-lysyl-[glycine-cleavage complex H protein] + glycine + H(+) = N(6)-[(R)-S(8)-aminomethyldihydrolipoyl]-L-lysyl-[glycine-cleavage complex H protein] + CO2. In terms of biological role, the glycine cleavage system catalyzes the degradation of glycine. The P protein binds the alpha-amino group of glycine through its pyridoxal phosphate cofactor; CO(2) is released and the remaining methylamine moiety is then transferred to the lipoamide cofactor of the H protein. This Legionella pneumophila subsp. pneumophila (strain Philadelphia 1 / ATCC 33152 / DSM 7513) protein is Probable glycine dehydrogenase (decarboxylating) subunit 2.